The sequence spans 200 residues: Rho-related protein racH (200 aa).

11–18 contributes to the GTP binding site; sequence GDMSVGKT. The Effector region motif lies at 33–41; sequence YVPTVFDNY. Residues 58 to 62 and 117 to 120 contribute to the GTP site; these read DTAGS and TKLD. A disordered region spans residues 178 to 200; the sequence is EELAKSKKDSKKGDKDSKDCIIQ. At Cys-197 the chain carries Cysteine methyl ester. The S-geranylgeranyl cysteine moiety is linked to residue Cys-197. A propeptide spans 198-200 (removed in mature form); sequence IIQ.

Belongs to the small GTPase superfamily. Rho family.

The protein localises to the cell membrane. This is Rho-related protein racH (racH) from Dictyostelium discoideum (Social amoeba).